The following is a 630-amino-acid chain: Sorting nexin-4 (630 aa).

Polar residues-rich tracts occupy residues 1–11 (MSSEDQFTSIQ) and 19–28 (NTNNTPTDTT). The disordered stretch occupies residues 1–143 (MSSEDQFTSI…QQPQQQLASI (143 aa)). Basic residues predominate over residues 32–49 (KSSKSKKSKKSSSKKKNG). Low complexity predominate over residues 50-60 (NKISPSSTTET). Over residues 81 to 94 (DDNHEVDDGNKEQN) the composition is skewed to basic and acidic residues. Residues 130 to 143 (QQQLQQPQQQLASI) show a composition bias toward low complexity. Positions 187–321 (SIKTTVTHPN…HLFISNSNDW (135 aa)) constitute a PX domain. Arg243, Lys269, and Arg288 together coordinate a 1,2-diacyl-sn-glycero-3-phospho-(1D-myo-inositol-3-phosphate). 2 coiled-coil regions span residues 361–413 (SKHK…SNQI) and 550–581 (TIKS…INEE).

It belongs to the sorting nexin family.

The protein resides in the cytoplasm. The protein localises to the cytosol. Its subcellular location is the preautophagosomal structure membrane. It localises to the endosome membrane. In terms of biological role, sorting nexin, involved in the separation or division of vacuoles throughout the entire life cycle of the cells. Involved in retrieval of late-Golgi SNAREs from post-Golgi endosomes to the trans-Golgi network, for cytoplasm to vacuole transport (Cvt), and autophagy of large cargos including mitophagy, pexophagy and glycophagy. The chain is Sorting nexin-4 (SNX4) from Candida albicans (strain SC5314 / ATCC MYA-2876) (Yeast).